Consider the following 231-residue polypeptide: Flagellar L-ring protein 2 (231 aa).

The N-terminal stretch at 1 to 15 (MKNLILILPLLMLTG) is a signal peptide. A lipid anchor (N-palmitoyl cysteine) is attached at Cys-16. Cys-16 is lipidated: S-diacylglycerol cysteine. A disordered region spans residues 30-54 (SPVGSGLRTQADPIPVTPRMRTPVS).

Belongs to the FlgH family. In terms of assembly, the basal body constitutes a major portion of the flagellar organelle and consists of four rings (L,P,S, and M) mounted on a central rod.

The protein resides in the cell outer membrane. Its subcellular location is the bacterial flagellum basal body. Assembles around the rod to form the L-ring and probably protects the motor/basal body from shearing forces during rotation. The protein is Flagellar L-ring protein 2 of Bradyrhizobium diazoefficiens (strain JCM 10833 / BCRC 13528 / IAM 13628 / NBRC 14792 / USDA 110).